The primary structure comprises 447 residues: UPF0210 protein LCK_00974 (447 aa).

The protein belongs to the UPF0210 family. As to quaternary structure, homodimer.

This is UPF0210 protein LCK_00974 from Leuconostoc citreum (strain KM20).